Consider the following 186-residue polypeptide: Elongation factor P (186 aa).

The protein belongs to the elongation factor P family.

The protein localises to the cytoplasm. It functions in the pathway protein biosynthesis; polypeptide chain elongation. Its function is as follows. Involved in peptide bond synthesis. Stimulates efficient translation and peptide-bond synthesis on native or reconstituted 70S ribosomes in vitro. Probably functions indirectly by altering the affinity of the ribosome for aminoacyl-tRNA, thus increasing their reactivity as acceptors for peptidyl transferase. The polypeptide is Elongation factor P (Cupriavidus metallidurans (strain ATCC 43123 / DSM 2839 / NBRC 102507 / CH34) (Ralstonia metallidurans)).